The sequence spans 231 residues: 7-cyano-7-deazaguanine synthase (231 aa).

8-18 serves as a coordination point for ATP; sequence FSGGQDSTTCL. The Zn(2+) site is built by cysteine 188, cysteine 197, cysteine 200, and cysteine 203.

Belongs to the QueC family. The cofactor is Zn(2+).

The enzyme catalyses 7-carboxy-7-deazaguanine + NH4(+) + ATP = 7-cyano-7-deazaguanine + ADP + phosphate + H2O + H(+). Its pathway is purine metabolism; 7-cyano-7-deazaguanine biosynthesis. Its function is as follows. Catalyzes the ATP-dependent conversion of 7-carboxy-7-deazaguanine (CDG) to 7-cyano-7-deazaguanine (preQ(0)). This Salmonella gallinarum (strain 287/91 / NCTC 13346) protein is 7-cyano-7-deazaguanine synthase.